The following is a 123-amino-acid chain: Large ribosomal subunit protein bL12 (123 aa).

It belongs to the bacterial ribosomal protein bL12 family. Homodimer. Part of the ribosomal stalk of the 50S ribosomal subunit. Forms a multimeric L10(L12)X complex, where L10 forms an elongated spine to which 2 to 4 L12 dimers bind in a sequential fashion. Binds GTP-bound translation factors.

Forms part of the ribosomal stalk which helps the ribosome interact with GTP-bound translation factors. Is thus essential for accurate translation. The sequence is that of Large ribosomal subunit protein bL12 from Clostridium botulinum (strain ATCC 19397 / Type A).